The following is a 243-amino-acid chain: Probable intron-encoded endonuclease aI3 (243 aa).

The protein belongs to the LAGLIDADG endonuclease family.

The protein localises to the mitochondrion. Functionally, mitochondrial DNA endonuclease involved in intron homing. This is Probable intron-encoded endonuclease aI3 (aI3) from Dictyostelium citrinum (Slime mold).